We begin with the raw amino-acid sequence, 216 residues long: Adenylate kinase (216 aa).

ATP is bound at residue 11–16 (GSGKGT). The tract at residues 31–60 (ATGDLFRKAIERGDELGDTVKSYMERGELV) is NMP. Residues Thr-32, Arg-37, 58-60 (ELV), 86-89 (GFPR), and Gln-93 each bind AMP. The tract at residues 127 to 163 (GRWVCRSCQSPYQCGCAEVAEGKCSRCQGELYQRPDD) is LID. Arg-128 contributes to the ATP binding site. Residues Cys-131, Cys-134, Cys-150, and Cys-153 each coordinate Zn(2+). AMP is bound by residues Arg-160 and Arg-171. Ala-199 lines the ATP pocket.

This sequence belongs to the adenylate kinase family. In terms of assembly, monomer.

The protein resides in the cytoplasm. It catalyses the reaction AMP + ATP = 2 ADP. It participates in purine metabolism; AMP biosynthesis via salvage pathway; AMP from ADP: step 1/1. Catalyzes the reversible transfer of the terminal phosphate group between ATP and AMP. Plays an important role in cellular energy homeostasis and in adenine nucleotide metabolism. This chain is Adenylate kinase, found in Dehalococcoides mccartyi (strain ATCC BAA-2266 / KCTC 15142 / 195) (Dehalococcoides ethenogenes (strain 195)).